We begin with the raw amino-acid sequence, 282 residues long: MAAQVLSGHEAAEAVYEEIRARLRSLSFTPSLRVIRLGEDPASVAYVRLKDKRARALGYRSQVEVYPEDLPEEALLERIAALNADEEVDGILVQLPLPPHIRTQRVLEAIHPLKDVDGFHPLNVGRLWSGGKGLFPCTPLGVVRLLKHYGVDLRGKEVVVVGRSNIVGKPLAGLLLREDATVTLAHSKTQDLPEVTRRAQVLVVAVGRPHLVRKEWVREGAIVVDVGVNRVEGRLLGDVHPEVAEVAFALTPVPGGVGPMTVAMLMGNTLEAALLRRHGASG.

Residues 162–164, Ser187, and Val228 each bind NADP(+); that span reads GRS.

Belongs to the tetrahydrofolate dehydrogenase/cyclohydrolase family. Homodimer.

It carries out the reaction (6R)-5,10-methylene-5,6,7,8-tetrahydrofolate + NADP(+) = (6R)-5,10-methenyltetrahydrofolate + NADPH. The enzyme catalyses (6R)-5,10-methenyltetrahydrofolate + H2O = (6R)-10-formyltetrahydrofolate + H(+). It functions in the pathway one-carbon metabolism; tetrahydrofolate interconversion. Functionally, catalyzes the oxidation of 5,10-methylenetetrahydrofolate to 5,10-methenyltetrahydrofolate and then the hydrolysis of 5,10-methenyltetrahydrofolate to 10-formyltetrahydrofolate. The protein is Bifunctional protein FolD of Thermus thermophilus (strain ATCC 27634 / DSM 579 / HB8).